We begin with the raw amino-acid sequence, 619 residues long: Zinc finger protein 668 (619 aa).

Met-1 is modified (N-acetylmethionine). Ser-10 carries the phosphoserine modification. Residues 22-44 (YKCLSCTKTFPNAPRAARHAATH) form a C2H2-type 1 zinc finger. The tract at residues 34-79 (APRAARHAATHGPADCSEEVAEVKPKPETEAKAEEASGEKVSGSAA) is disordered. The segment covering 54–71 (AEVKPKPETEAKAEEASG) has biased composition (basic and acidic residues). Glycyl lysine isopeptide (Lys-Gly) (interchain with G-Cter in SUMO2) cross-links involve residues Lys-57, Lys-59, Lys-65, and Lys-80. C2H2-type zinc fingers lie at residues 84–106 (YACP…GRSH), 112–134 (FPCP…LASH), 140–162 (FRCA…QRGH), 168–190 (YACA…RRTH), 196–218 (YSCE…ERSH), 224–246 (FLCS…QRIH), 252–274 (YRCP…ERTH), 280–302 (FLCP…QRAH), 308–330 (YHCE…RRVH), 336–358 (FKCL…ALVH), and 364–386 (FRCE…SRVH). Residue Lys-154 forms a Glycyl lysine isopeptide (Lys-Gly) (interchain with G-Cter in SUMO2) linkage. Ser-387 carries the phosphoserine modification. The C2H2-type 13 zinc-finger motif lies at 392 to 414 (FHCNACGKSFVVSSSLRKHERTH). The segment at 492–513 (REAPGPLEGAGEAGGEEADEKP) is disordered. Residue Lys-512 forms a Glycyl lysine isopeptide (Lys-Gly) (interchain with G-Cter in SUMO2) linkage. C2H2-type zinc fingers lie at residues 516–538 (FVCR…ERSH), 544–566 (FPCT…SRTH), and 572–594 (YTCP…ERTH).

Belongs to the krueppel C2H2-type zinc-finger protein family.

It localises to the nucleus. In terms of biological role, may be involved in transcriptional regulation. May play a role in DNA repair process. This chain is Zinc finger protein 668 (ZNF668), found in Homo sapiens (Human).